A 119-amino-acid polypeptide reads, in one-letter code: HHSLCAFWVRIFPTQLPLFTPCCTPFLEIPENLSSHPEEGCGSEVKIARAATSLSFYSTLARPRVLSPLTEVQNFLYKGMLGSKCAQYLFQKVLMNVFPCNKPQQRHSSHIQQHLGRLF.

This is an uncharacterized protein from Bos taurus (Bovine).